A 560-amino-acid chain; its full sequence is Ribonuclease J 1 (560 aa).

Positions 76, 78, 80, 81, 144, and 166 each coordinate Zn(2+). A substrate-binding site is contributed by His366–His370. His392 is a binding site for Zn(2+).

It belongs to the metallo-beta-lactamase superfamily. RNA-metabolizing metallo-beta-lactamase-like family. Bacterial RNase J subfamily. Homodimer, may be a subunit of the RNA degradosome. Zn(2+) is required as a cofactor.

The protein localises to the cytoplasm. In terms of biological role, an RNase that has 5'-3' exonuclease and possibly endonuclease activity. Involved in maturation of rRNA and in some organisms also mRNA maturation and/or decay. Has an overlapping but not completely redundant role with RNase J2 in the decay of mRNA. The sequence is that of Ribonuclease J 1 from Streptococcus pyogenes serotype M3 (strain ATCC BAA-595 / MGAS315).